The chain runs to 430 residues: 3-phosphoshikimate 1-carboxyvinyltransferase (430 aa).

Residues lysine 25, serine 26, and arginine 30 each coordinate 3-phosphoshikimate. Lysine 25 is a binding site for phosphoenolpyruvate. Glycine 98 and arginine 126 together coordinate phosphoenolpyruvate. 3-phosphoshikimate is bound by residues serine 169, serine 170, glutamine 171, serine 198, glutamate 313, and histidine 342. A phosphoenolpyruvate-binding site is contributed by glutamine 171. Glutamate 313 functions as the Proton acceptor in the catalytic mechanism. Phosphoenolpyruvate-binding residues include arginine 346, arginine 387, and lysine 412.

This sequence belongs to the EPSP synthase family. In terms of assembly, monomer.

The protein resides in the cytoplasm. It carries out the reaction 3-phosphoshikimate + phosphoenolpyruvate = 5-O-(1-carboxyvinyl)-3-phosphoshikimate + phosphate. Its pathway is metabolic intermediate biosynthesis; chorismate biosynthesis; chorismate from D-erythrose 4-phosphate and phosphoenolpyruvate: step 6/7. Its function is as follows. Catalyzes the transfer of the enolpyruvyl moiety of phosphoenolpyruvate (PEP) to the 5-hydroxyl of shikimate-3-phosphate (S3P) to produce enolpyruvyl shikimate-3-phosphate and inorganic phosphate. This is 3-phosphoshikimate 1-carboxyvinyltransferase from Mycobacterium leprae (strain TN).